The following is a 433-amino-acid chain: UDP-N-acetylglucosamine 1-carboxyvinyltransferase (433 aa).

34-35 (KN) lines the phosphoenolpyruvate pocket. Arg-104 provides a ligand contact to UDP-N-acetyl-alpha-D-glucosamine. Cys-128 functions as the Proton donor in the catalytic mechanism. Cys-128 carries the 2-(S-cysteinyl)pyruvic acid O-phosphothioketal modification. Residues Asp-320 and Ile-342 each contribute to the UDP-N-acetyl-alpha-D-glucosamine site.

This sequence belongs to the EPSP synthase family. MurA subfamily.

It localises to the cytoplasm. The enzyme catalyses phosphoenolpyruvate + UDP-N-acetyl-alpha-D-glucosamine = UDP-N-acetyl-3-O-(1-carboxyvinyl)-alpha-D-glucosamine + phosphate. It functions in the pathway cell wall biogenesis; peptidoglycan biosynthesis. Functionally, cell wall formation. Adds enolpyruvyl to UDP-N-acetylglucosamine. The protein is UDP-N-acetylglucosamine 1-carboxyvinyltransferase of Parasynechococcus marenigrum (strain WH8102).